The chain runs to 325 residues: Probable siderophore-binding lipoprotein YfiY (325 aa).

The first 20 residues, 1–20 (MKKHISMLFVFLMAVMVLSA), serve as a signal peptide directing secretion. Cys21 carries N-palmitoyl cysteine lipidation. Cys21 carries the S-diacylglycerol cysteine lipid modification. Residues 56-325 (RIVVLTNEGT…DIETYFLKTK (270 aa)) form the Fe/B12 periplasmic-binding domain. Ser290 bears the Phosphoserine mark. Thr302 is modified (phosphothreonine).

Belongs to the bacterial solute-binding protein 8 family. As to quaternary structure, the complex is composed of one ATP-binding protein (YusV), two transmembrane proteins (YfiZ and YfhA) and a solute-binding protein (YfiY). Interacts with FloT.

The protein localises to the cell membrane. Its subcellular location is the cytoplasm. The protein resides in the membrane raft. Part of the ABC transporter complex YfiYZ/YfhA/YusV involved in import of the iron-hydroxamate siderophores schizokinen, arthrobactin and corprogen. Binds the siderophores and delivers them to the surface of YfiZ/YfhA. This chain is Probable siderophore-binding lipoprotein YfiY (yfiY), found in Bacillus subtilis (strain 168).